We begin with the raw amino-acid sequence, 948 residues long: Phosphoenolpyruvate carboxylase (948 aa).

Residues H138 and K610 contribute to the active site.

It belongs to the PEPCase type 1 family. It depends on Mg(2+) as a cofactor.

The catalysed reaction is oxaloacetate + phosphate = phosphoenolpyruvate + hydrogencarbonate. In terms of biological role, forms oxaloacetate, a four-carbon dicarboxylic acid source for the tricarboxylic acid cycle. The protein is Phosphoenolpyruvate carboxylase of Streptococcus sanguinis (strain SK36).